An 89-amino-acid polypeptide reads, in one-letter code: Small ribosomal subunit protein uS15 (89 aa).

This sequence belongs to the universal ribosomal protein uS15 family. As to quaternary structure, part of the 30S ribosomal subunit. Forms a bridge to the 50S subunit in the 70S ribosome, contacting the 23S rRNA.

In terms of biological role, one of the primary rRNA binding proteins, it binds directly to 16S rRNA where it helps nucleate assembly of the platform of the 30S subunit by binding and bridging several RNA helices of the 16S rRNA. Functionally, forms an intersubunit bridge (bridge B4) with the 23S rRNA of the 50S subunit in the ribosome. This is Small ribosomal subunit protein uS15 from Acidiphilium cryptum (strain JF-5).